The sequence spans 295 residues: MMRILLFVATNLAVVLVASITLSLFGFNGFMAANGVDLNLSSLLVFCAVFGFAGSLVSLFISKWMAKMSTGTQIISQPRTRHEQWLLQTVEELSREAGIKMPEVGIFPAYEANAFATGWNRNDALVAVSQGLLERFSPDEVRAVLAHEIGHVANGDMVTLALVQGVVNTFVMFFARIIGNFVDKVIFKNEEGQGIAYYVATIVAELVLGILASMIVMWFSRRREYRADEAGAQLAGTAAMIGALQRLRVEQGLPVHMPDTMKAFGINGGLKHGLAGLLMSHPPLEERIEALRRRG.

2 helical membrane-spanning segments follow: residues 4–24 and 41–61; these read ILLF…TLSL and SSLL…SLFI. His-147 contributes to the Zn(2+) binding site. The active site involves Glu-148. His-151 provides a ligand contact to Zn(2+). Helical transmembrane passes span 158–178 and 199–219; these read VTLA…ARII and VATI…VMWF. A Zn(2+)-binding site is contributed by Glu-224.

It belongs to the peptidase M48B family. It depends on Zn(2+) as a cofactor.

It is found in the cell inner membrane. The sequence is that of Protease HtpX from Pseudomonas putida (strain W619).